The primary structure comprises 123 residues: MKLLLLALPVLVLLPQVIPAYSGEKKCWNRSGHCRKQCKDGEAVKDTCKNLRACCVPSNEDHRRVPMTSPTPLSDSTPGIIDDILTVRFTTDYFEVSSKKDMVEESEAGRGTETSLPNVHHSS.

Residues Met1 to Pro19 form the signal peptide. Disulfide bonds link Cys27–Cys54, Cys34–Cys48, and Cys38–Cys55. The propeptide occupies Val65–Ser123. Residues Lys100–Arg110 show a composition bias toward basic and acidic residues. Positions Lys100–Ser123 are disordered. Residues Thr112–Ser123 are compositionally biased toward polar residues.

It belongs to the beta-defensin family. The three-dimensional structure formed by the three intramolecular disulfide bridges is indispensable for antimicrobial activity.

It is found in the secreted. In terms of biological role, host defense peptide that exhibits antimicrobial activity against both Gram-negative bacteria, such as E.coli and S.typhimurium, and Gram-positive bacteria, such as S.aureus and B.subtilis. Inhibits cell adhesion of E.coli on intestinal epithelial enterocytes. Causes rapid permeabilization of both the outer and inner membrane of E.coli, leading to morphological alterations on the bacterial surface. Binds to bacterial lipopolysaccharides (LPS) with high affinity, and may thereby be involved in immunoregulation through LPS neutralization. May contribute to epididymal innate immunity and protect the sperm against attack by microorganisms. This is Defensin beta 118 (DEFB118) from Pan troglodytes (Chimpanzee).